Reading from the N-terminus, the 212-residue chain is GrpE protein homolog, mitochondrial (212 aa).

It belongs to the GrpE family. As to quaternary structure, component of the PAM complex, at least composed of mtHsp70, MGE1, TIM44, PAM16, PAM17 and PAM18.

Its subcellular location is the mitochondrion matrix. Essential component of the PAM complex, a complex required for the translocation of transit peptide-containing proteins from the inner membrane into the mitochondrial matrix in an ATP-dependent manner. Seems to control the nucleotide-dependent binding of SSC1 to substrate proteins. In Eremothecium gossypii (strain ATCC 10895 / CBS 109.51 / FGSC 9923 / NRRL Y-1056) (Yeast), this protein is GrpE protein homolog, mitochondrial (mge1).